A 192-amino-acid polypeptide reads, in one-letter code: Mitochondrial import inner membrane translocase subunit TIM18 (192 aa).

The transit peptide at Met1–Leu42 directs the protein to the mitochondrion. At Asn43–Thr88 the chain is on the mitochondrial matrix side. Residues Leu89–Leu109 traverse the membrane as a helical segment. Residues Leu110–Ser113 lie on the Mitochondrial intermembrane side of the membrane. Residues Leu114–Ile134 traverse the membrane as a helical segment. Residues Pro135–Lys144 lie on the Mitochondrial matrix side of the membrane. Residues Leu145 to Glu165 traverse the membrane as a helical segment. The Mitochondrial intermembrane segment spans residues Thr166–Asn192.

It belongs to the CybS family. Component of the TIM22 complex, whose core is composed of TIM18, TIM22 and TIM54, associated with the peripheral proteins MRS5/TIM12 and the 70 kDa heterohexamer composed of TIM9 and TIM10 (or TIM8 and TIM13).

The protein localises to the mitochondrion inner membrane. Component of the TIM22 complex, a complex that mediates the import and insertion of multi-pass transmembrane proteins into the mitochondrial inner membrane. The TIM22 complex forms a twin-pore translocase that uses the membrane potential as external driving force. Its role in the complex is unclear but it may be involved in the assembly and stabilization of the TIM22 complex. The sequence is that of Mitochondrial import inner membrane translocase subunit TIM18 (TIM18) from Saccharomyces cerevisiae (strain ATCC 204508 / S288c) (Baker's yeast).